Consider the following 227-residue polypeptide: MICOS complex subunit MIC19 (227 aa).

Gly-2 carries the N-myristoyl glycine lipid modification. The residue at position 29 (Ser-29) is a Phosphoserine. Positions 34–60 are disordered; sequence DRMKETSPSGPKSQRYSGTYGASVSDE. Residues 39–55 show a composition bias toward polar residues; the sequence is TSPSGPKSQRYSGTYGA. The residue at position 49 (Tyr-49) is a Phosphotyrosine. Residues Ser-50, Ser-56, and Ser-58 each carry the phosphoserine modification. Lys-142 is subject to N6-acetyllysine. The CHCH domain occupies 180-222; the sequence is HPVCADLQAQILQCYRQNTQQTLSCSALASQYMRCVNQAKQST. 2 consecutive short sequence motifs (cx9C motif) follow at residues 183 to 193 and 204 to 214; these read CADLQAQILQC and CSALASQYMRC. Intrachain disulfides connect Cys-183–Cys-214 and Cys-193–Cys-204.

This sequence belongs to the MICOS complex subunit Mic19 family. Metazoan Mic19 subfamily. In terms of assembly, component of the mitochondrial contact site and cristae organizing system (MICOS) complex, composed of at least MICOS10/MIC10, CHCHD3/MIC19, CHCHD6/MIC25, APOOL/MIC27, IMMT/MIC60, APOO/MIC23/MIC26 and MICOS13/MIC13. This complex was also known under the names MINOS or MitOS complex. The MICOS complex associates with mitochondrial outer membrane proteins SAMM50, MTX1 and MTX2 (together described as components of the mitochondrial outer membrane sorting assembly machinery (SAM) complex) and DNAJC11, mitochondrial inner membrane protein TMEM11 and with HSPA9. The MICOS and SAM complexes together with DNAJC11 are part of a large protein complex spanning both membranes termed the mitochondrial intermembrane space bridging (MIB) complex. Interacts with HSPA1A/HSPA1B and OPA1, preferentially with the soluble OPA1 form. Interacts with IMMT/MIC60.

It localises to the mitochondrion inner membrane. The protein resides in the cytoplasm. It is found in the nucleus. Its subcellular location is the mitochondrion. Component of the MICOS complex, a large protein complex of the mitochondrial inner membrane that plays crucial roles in the maintenance of crista junctions, inner membrane architecture, and formation of contact sites to the outer membrane. Has also been shown to function as a transcription factor which binds to the BAG1 promoter and represses BAG1 transcription. Plays an important role in the maintenance of the MICOS complex stability and the mitochondrial cristae morphology. This is MICOS complex subunit MIC19 (CHCHD3) from Bos taurus (Bovine).